Consider the following 166-residue polypeptide: Interferon gamma (166 aa).

The N-terminal stretch at 1–23 (MKYTSYFLALLLCVLLGFSGSYG) is a signal peptide. Gln-24 bears the Pyrrolidone carboxylic acid mark. N-linked (GlcNAc...) asparagine glycans are attached at residues Asn-39 and Asn-106.

Belongs to the type II (or gamma) interferon family. As to quaternary structure, homodimer. Interacts with IFNGR1 (via extracellular domain); this interaction promotes IFNGR1 dimerization. Released primarily from activated T lymphocytes.

Its subcellular location is the secreted. Functionally, type II interferon produced by immune cells such as T-cells and NK cells that plays crucial roles in antimicrobial, antiviral, and antitumor responses by activating effector immune cells and enhancing antigen presentation. Primarily signals through the JAK-STAT pathway after interaction with its receptor IFNGR1 to affect gene regulation. Upon IFNG binding, IFNGR1 intracellular domain opens out to allow association of downstream signaling components JAK2, JAK1 and STAT1, leading to STAT1 activation, nuclear translocation and transcription of IFNG-regulated genes. Many of the induced genes are transcription factors such as IRF1 that are able to further drive regulation of a next wave of transcription. Plays a role in class I antigen presentation pathway by inducing a replacement of catalytic proteasome subunits with immunoproteasome subunits. In turn, increases the quantity, quality, and repertoire of peptides for class I MHC loading. Increases the efficiency of peptide generation also by inducing the expression of activator PA28 that associates with the proteasome and alters its proteolytic cleavage preference. Up-regulates as well MHC II complexes on the cell surface by promoting expression of several key molecules such as cathepsins B/CTSB, H/CTSH, and L/CTSL. Participates in the regulation of hematopoietic stem cells during development and under homeostatic conditions by affecting their development, quiescence, and differentiation. This is Interferon gamma (IFNG) from Bubalus bubalis (Domestic water buffalo).